Reading from the N-terminus, the 203-residue chain is Cutinase pbc1 (203 aa).

An N-terminal signal peptide occupies residues 1–18 (MKVTALGNTLTGFGQALA). Cys32 and Cys107 form a disulfide bridge. Catalysis depends on Ser118, which acts as the Nucleophile. Cys166 and Cys173 are oxidised to a cystine. His170 is a catalytic residue. Residue His183 is the Proton donor/acceptor of the active site.

It belongs to the cutinase family. The 2 disulfide bonds play a critical role in holding the catalytic residues in juxta-position; reduction of the disulfide bridges results in the complete inactivation of the enzyme.

Its subcellular location is the secreted. The enzyme catalyses cutin + H2O = cutin monomers.. Functionally, catalyzes the hydrolysis of complex carboxylic polyesters found in the cell wall of plants. Degrades cutin, a macromolecule that forms the structure of the plant cuticle. Allows pathogenic fungi to penetrate through the cuticular barrier into the host plant during the initial stage of fungal infection. The polypeptide is Cutinase pbc1 (Pyrenopeziza brassicae).